The primary structure comprises 353 residues: D-alanine--D-alanine ligase A (353 aa).

The ATP-grasp domain maps to 141–346 (KRLVNEAGLS…YPEIINRLVA (206 aa)). 169–224 (EQALGLPIFIKPARQGSSVGVHKVVTEADYQAAMSDGFTYDDKLLAEEFIQAREVE) contacts ATP. Mg(2+)-binding residues include D300, E313, and N315.

This sequence belongs to the D-alanine--D-alanine ligase family. It depends on Mg(2+) as a cofactor. Requires Mn(2+) as cofactor.

It localises to the cytoplasm. The catalysed reaction is 2 D-alanine + ATP = D-alanyl-D-alanine + ADP + phosphate + H(+). Its pathway is cell wall biogenesis; peptidoglycan biosynthesis. Cell wall formation. The sequence is that of D-alanine--D-alanine ligase A from Brucella suis biovar 1 (strain 1330).